The following is a 340-amino-acid chain: Probable peroxidase 61 (340 aa).

The first 25 residues, 1-25, serve as a signal peptide directing secretion; sequence MQFVNFFPLLALVVISLAGKATVEA. Cystine bridges form between Cys46/Cys122, Cys79/Cys84, Cys128/Cys331, and Cys205/Cys237. Asn63 is a glycosylation site (N-linked (GlcNAc...) asparagine). Arg73 is a catalytic residue. Residues Asp78, Val81, Gly83, Asp85, and Ser87 each coordinate Ca(2+). Pro168 provides a ligand contact to substrate. Heme b is bound at residue His198. Ser199 contacts Ca(2+). The N-linked (GlcNAc...) asparagine glycan is linked to Asn226. Ca(2+) is bound by residues Asp255 and Ser258.

It belongs to the peroxidase family. Classical plant (class III) peroxidase subfamily. Heme b is required as a cofactor. It depends on Ca(2+) as a cofactor.

Its subcellular location is the secreted. It carries out the reaction 2 a phenolic donor + H2O2 = 2 a phenolic radical donor + 2 H2O. In terms of biological role, removal of H(2)O(2), oxidation of toxic reductants, biosynthesis and degradation of lignin, suberization, auxin catabolism, response to environmental stresses such as wounding, pathogen attack and oxidative stress. The enzyme activity has to be proved. The protein is Probable peroxidase 61 (PER61) of Arabidopsis thaliana (Mouse-ear cress).